Here is a 151-residue protein sequence, read N- to C-terminus: Deoxyuridine 5'-triphosphate nucleotidohydrolase (151 aa).

Residues Arg-70–Gly-72, Asn-83, Leu-87–Asp-89, and Met-97 each bind substrate.

It belongs to the dUTPase family. It depends on Mg(2+) as a cofactor.

The catalysed reaction is dUTP + H2O = dUMP + diphosphate + H(+). Its pathway is pyrimidine metabolism; dUMP biosynthesis; dUMP from dCTP (dUTP route): step 2/2. This enzyme is involved in nucleotide metabolism: it produces dUMP, the immediate precursor of thymidine nucleotides and it decreases the intracellular concentration of dUTP so that uracil cannot be incorporated into DNA. This is Deoxyuridine 5'-triphosphate nucleotidohydrolase from Tolumonas auensis (strain DSM 9187 / NBRC 110442 / TA 4).